We begin with the raw amino-acid sequence, 490 residues long: Betaine aldehyde dehydrogenase (490 aa).

Residues Thr-26, Ile-27, and Asp-93 each contribute to the K(+) site. NAD(+) is bound at residue 150–152; that stretch reads GAW. The active-site Charge relay system is the Lys-162. 176-179 serves as a coordination point for NAD(+); that stretch reads KPSE. Val-180 is a K(+) binding site. 230–233 is a binding site for NAD(+); the sequence is GVAS. Residue Leu-246 coordinates K(+). The active-site Proton acceptor is the Glu-252. Gly-254, Cys-286, and Glu-387 together coordinate NAD(+). Cys-286 serves as the catalytic Nucleophile. Cysteine sulfenic acid (-SOH) is present on Cys-286. Positions 457 and 460 each coordinate K(+). The active-site Charge relay system is the Glu-464.

Belongs to the aldehyde dehydrogenase family. As to quaternary structure, dimer of dimers. It depends on K(+) as a cofactor.

It catalyses the reaction betaine aldehyde + NAD(+) + H2O = glycine betaine + NADH + 2 H(+). It functions in the pathway amine and polyamine biosynthesis; betaine biosynthesis via choline pathway; betaine from betaine aldehyde: step 1/1. Functionally, involved in the biosynthesis of the osmoprotectant glycine betaine. Catalyzes the irreversible oxidation of betaine aldehyde to the corresponding acid. This Escherichia coli O6:H1 (strain CFT073 / ATCC 700928 / UPEC) protein is Betaine aldehyde dehydrogenase.